The chain runs to 303 residues: Movement protein (303 aa).

Residues 1 to 18 (MSNIVSPFSGSSRTTSDV) are compositionally biased toward polar residues. Disordered regions lie at residues 1 to 24 (MSNIVSPFSGSSRTTSDVGKQAGG) and 267 to 303 (EESESPSALGRGVKDSKSVSASSVAGLPVSSPTLRIK).

It belongs to the bromovirus movement protein family. Phosphorylated by host.

It localises to the host cell junction. The protein resides in the host plasmodesma. Functionally, transports viral genome to neighboring plant cells directly through plasmosdesmata, without any budding. The movement protein allows efficient cell to cell propagation, by bypassing the host cell wall barrier. Acts by forming a tubular structure at the host plasmodesmata, enlarging it enough to allow free passage of virion capsids. This is Movement protein from Brome mosaic virus (BMV).